Consider the following 162-residue polypeptide: MFKKFSALFTLLFTLCLVNPMLVYSIDLDENTRSVPLDDAGNTVILTPEQVKRGKRLFNASCGQCHVGGITKTNPNLGLEPDALSLATPARDNINALVDYMKNPTSYDGLESIAEVHPSIKSADIFPKMRSLSDEDLFAIGGHILLQPKLSSEKWGGGKIYY.

The signal sequence occupies residues 1-25 (MFKKFSALFTLLFTLCLVNPMLVYS). Heme c is bound by residues C62, C65, H66, and H117.

The protein belongs to the cytochrome c family. PsbV subfamily. As to quaternary structure, PSII is composed of 1 copy each of membrane proteins PsbA, PsbB, PsbC, PsbD, PsbE, PsbF, PsbH, PsbI, PsbJ, PsbK, PsbL, PsbM, PsbT, PsbX, PsbY, PsbZ, Psb30/Ycf12, at least 3 peripheral proteins of the oxygen-evolving complex and a large number of cofactors. It forms dimeric complexes. The cofactor is heme c.

It is found in the plastid. It localises to the chloroplast thylakoid membrane. One of the extrinsic, lumenal subunits of photosystem II (PSII). PSII is a light-driven water plastoquinone oxidoreductase, using light energy to abstract electrons from H(2)O, generating a proton gradient subsequently used for ATP formation. The extrinsic proteins stabilize the structure of photosystem II oxygen-evolving complex (OEC), the ion environment of oxygen evolution and protect the OEC against heat-induced inactivation. This Guillardia theta (Cryptophyte) protein is Photosystem II extrinsic protein V.